Here is a 375-residue protein sequence, read N- to C-terminus: Chaperone protein DnaJ (375 aa).

The J domain occupies 5-70 (DFYETLGVAK…QKRAAYDRYG (66 aa)). The segment at 136–214 (GKTAQIRVPT…CHGQGRVTEE (79 aa)) adopts a CR-type zinc-finger fold. Zn(2+) contacts are provided by C149, C152, C166, C169, C188, C191, C202, and C205. 4 CXXCXGXG motif repeats span residues 149–156 (CDVCSGSG), 166–173 (CGTCQGTG), 188–195 (CPTCHGRG), and 202–209 (CPKCHGQG).

The protein belongs to the DnaJ family. As to quaternary structure, homodimer. Requires Zn(2+) as cofactor.

It is found in the cytoplasm. In terms of biological role, participates actively in the response to hyperosmotic and heat shock by preventing the aggregation of stress-denatured proteins and by disaggregating proteins, also in an autonomous, DnaK-independent fashion. Unfolded proteins bind initially to DnaJ; upon interaction with the DnaJ-bound protein, DnaK hydrolyzes its bound ATP, resulting in the formation of a stable complex. GrpE releases ADP from DnaK; ATP binding to DnaK triggers the release of the substrate protein, thus completing the reaction cycle. Several rounds of ATP-dependent interactions between DnaJ, DnaK and GrpE are required for fully efficient folding. Also involved, together with DnaK and GrpE, in the DNA replication of plasmids through activation of initiation proteins. The sequence is that of Chaperone protein DnaJ from Rhizobium johnstonii (strain DSM 114642 / LMG 32736 / 3841) (Rhizobium leguminosarum bv. viciae).